A 571-amino-acid chain; its full sequence is Germacrene B synthase TPS16CC (571 aa).

5 residues coordinate (2E,6E)-farnesyl diphosphate: R287, D324, D328, R465, and D468. D324 and D328 together coordinate Mg(2+). The DDXXD motif motif lies at 324–328 (DDIYD). Residues D468, S472, and E476 each coordinate Mg(2+).

The protein belongs to the terpene synthase family. Tpsb subfamily. Mg(2+) serves as cofactor. It depends on Mn(2+) as a cofactor. As to expression, highly expressed in glandular trichomes.

The enzyme catalyses (2E,6E)-farnesyl diphosphate = (1E,4E)-germacrene B + diphosphate. The protein operates within secondary metabolite biosynthesis; terpenoid biosynthesis. Its function is as follows. Involved in sesquiterpene olefins biosynthesis, constituants of cannabinoids and terpenoids-rich resins. Catalyzes mainly the conversion of (2E)-farnesyl diphosphate to germacrene B, which is spontaneously converted to gamma-elemene as a thermal degradation product. In Cannabis sativa (Hemp), this protein is Germacrene B synthase TPS16CC.